We begin with the raw amino-acid sequence, 186 residues long: Ribosome-recycling factor (186 aa).

The protein belongs to the RRF family.

It is found in the cytoplasm. Responsible for the release of ribosomes from messenger RNA at the termination of protein biosynthesis. May increase the efficiency of translation by recycling ribosomes from one round of translation to another. The protein is Ribosome-recycling factor of Paraburkholderia xenovorans (strain LB400).